Here is a 734-residue protein sequence, read N- to C-terminus: Photosystem I P700 chlorophyll a apoprotein A2 (734 aa).

8 helical membrane passes run 46–69 (IFAS…FHVA), 135–158 (LYRG…LHLQ), 175–199 (LNHH…HVAI), 273–291 (IAHH…GHMY), 330–353 (LHFQ…QHMY), 369–395 (AALY…IFFI), 417–439 (AIIS…LYVH), and 517–535 (FLVH…LILV). Positions 559 and 568 each coordinate [4Fe-4S] cluster. The next 2 membrane-spanning stretches (helical) occupy residues 575-596 (AFYL…YWHW) and 643-665 (LSVW…MFLI). Residues H654, M662, and Y670 each coordinate chlorophyll a. W671 serves as a coordination point for phylloquinone. The chain crosses the membrane as a helical span at residues 707–727 (LVGLSHFSVGYIFTYAAFLIA).

This sequence belongs to the PsaA/PsaB family. The PsaA/B heterodimer binds the P700 chlorophyll special pair and subsequent electron acceptors. PSI consists of a core antenna complex that captures photons, and an electron transfer chain that converts photonic excitation into a charge separation. The eukaryotic PSI reaction center is composed of at least 11 subunits. It depends on P700 is a chlorophyll a/chlorophyll a' dimer, A0 is one or more chlorophyll a, A1 is one or both phylloquinones and FX is a shared 4Fe-4S iron-sulfur center. as a cofactor.

Its subcellular location is the plastid. It is found in the chloroplast thylakoid membrane. It catalyses the reaction reduced [plastocyanin] + hnu + oxidized [2Fe-2S]-[ferredoxin] = oxidized [plastocyanin] + reduced [2Fe-2S]-[ferredoxin]. PsaA and PsaB bind P700, the primary electron donor of photosystem I (PSI), as well as the electron acceptors A0, A1 and FX. PSI is a plastocyanin-ferredoxin oxidoreductase, converting photonic excitation into a charge separation, which transfers an electron from the donor P700 chlorophyll pair to the spectroscopically characterized acceptors A0, A1, FX, FA and FB in turn. Oxidized P700 is reduced on the lumenal side of the thylakoid membrane by plastocyanin. This chain is Photosystem I P700 chlorophyll a apoprotein A2, found in Chara vulgaris (Common stonewort).